Reading from the N-terminus, the 309-residue chain is MQKQHNVVAGVDMGATHIRFCLRTAEGETLHCEKKRTAEVIAPGLVSGIGEMIDEQLRRFNARCHGLVMGFPALVSKDKRTIISTPNLPLTAADLYDLADKLENTLNCPVEFSRDVNLQLSWDVVENRLTQQLVLAAYLGTGMGFAVWMNGAPWTGAHGVAGELGHIPLGDMTQHCACGNPGCLETNCSGMALRRWYEQQPRNYPLRDLFVHAENAPFVQSLLENAARAIATSINLFDPDAVILGGGVMDMPAFPRETLVAMTQKYLRRPLPHQVVRFIAASSSDFNGAQGAAILAHQRFLPQFCAKAP.

ATP contacts are provided by residues Gly-10 to His-17 and Gly-142 to Met-149.

This sequence belongs to the ROK (NagC/XylR) family.

The enzyme catalyses D-allose + ATP = D-allose 6-phosphate + ADP + H(+). The protein operates within carbohydrate degradation; D-allose degradation. Functionally, catalyzes the phosphorylation of D-allose to D-allose 6-phosphate. Also has low level glucokinase activity in vitro. The protein is D-allose kinase of Escherichia coli (strain K12).